We begin with the raw amino-acid sequence, 341 residues long: Long-chain acyl-[acyl-carrier-protein] reductase (341 aa).

It belongs to the short-chain dehydrogenases/reductases (SDR) family. A divalent metal cation is required as a cofactor.

The enzyme catalyses a long-chain fatty aldehyde + holo-[ACP] + NADP(+) = a long-chain fatty acyl-[ACP] + NADPH + H(+). The catalysed reaction is a long-chain fatty aldehyde + holo-[ACP] + NAD(+) = a long-chain fatty acyl-[ACP] + NADH + H(+). Its function is as follows. Catalyzes the NADP-dependent reduction of long-chain acyl-ACP to the corresponding fatty aldehyde. Involved in the biosynthesis of alkanes, mainly heptadecane and pentadecane, by producing the fatty aldehydes used by aldehyde decarbonylase. This Synechococcus elongatus (strain ATCC 33912 / PCC 7942 / FACHB-805) (Anacystis nidulans R2) protein is Long-chain acyl-[acyl-carrier-protein] reductase.